A 429-amino-acid chain; its full sequence is Glutamate-1-semialdehyde 2,1-aminomutase 2 (429 aa).

Lys268 carries the post-translational modification N6-(pyridoxal phosphate)lysine.

This sequence belongs to the class-III pyridoxal-phosphate-dependent aminotransferase family. HemL subfamily. As to quaternary structure, homodimer. Pyridoxal 5'-phosphate serves as cofactor.

It localises to the cytoplasm. The catalysed reaction is (S)-4-amino-5-oxopentanoate = 5-aminolevulinate. It participates in porphyrin-containing compound metabolism; protoporphyrin-IX biosynthesis; 5-aminolevulinate from L-glutamyl-tRNA(Glu): step 2/2. This Staphylococcus aureus (strain MSSA476) protein is Glutamate-1-semialdehyde 2,1-aminomutase 2.